The primary structure comprises 397 residues: Proteinase-activated receptor 2 (397 aa).

Positions 1–25 (MRSPSAAWLLGAAILLAASLSCSGT) are cleaved as a signal peptide. A propeptide spans 26 to 36 (IQGTNRSSKGR) (removed for receptor activation). N-linked (GlcNAc...) asparagine glycosylation occurs at Asn-30. Topologically, residues 37–71 (SLIGKVDGTSHVTGKGVTVETVFSVDEFSASVLTG) are extracellular. A helical transmembrane segment spans residues 72–101 (KLTTVFLPIVYTIVFVVGLPSNGMALWVFL). Residues 102-108 (FRTKKKH) are Cytoplasmic-facing. A helical transmembrane segment spans residues 109–137 (PAVIYMANLALADLLSVIWFPLKIAYHIH). The Extracellular portion of the chain corresponds to 138–149 (GNNWIYGEALCN). Cys-148 and Cys-226 are disulfide-bonded. The helical transmembrane segment at 150-177 (VLIGFFYGNMYCSILFMTCLSVQRYWVI) threads the bilayer. At 178–183 (VNPMGH) the chain is on the cytoplasmic side. A helical membrane pass occupies residues 184 to 211 (SRKKANIAIGISLAIWLLILLVTIPLYV). Over 212-235 (VKQTIFIPALNITTCHDVLPEQLL) the chain is Extracellular. Asn-222 carries an N-linked (GlcNAc...) asparagine glycan. Residues 236–269 (VGDMFNYFLSLAIGVFLFPAFLTASAYVLMIRML) traverse the membrane as a helical segment. The Cytoplasmic segment spans residues 270–277 (RSSAMDEN). Residues 278–317 (SEKKRKRAIKLIVTVLAMYLICFTPSNLLLVVHYFLIKSQ) traverse the membrane as a helical segment. The Extracellular portion of the chain corresponds to 318–323 (GQSHVY). The helical transmembrane segment at 324-347 (ALYIVALCLSTLNSCIDPFVYYFV) threads the bilayer. The Cytoplasmic segment spans residues 348–397 (SHDFRDHAKNALLCRSVRTVKQMQVSLTSKKHSRKSSSYSSSSTTVKTSY). A lipid anchor (S-palmitoyl cysteine) is attached at Cys-361. Residues 373 to 397 (SLTSKKHSRKSSSYSSSSTTVKTSY) are disordered. Residues 383–397 (SSSYSSSSTTVKTSY) show a composition bias toward low complexity.

The protein belongs to the G-protein coupled receptor 1 family. As to quaternary structure, interacts with TLR4, COPS5 and TMED2. Interacts with GNAQ, GNA11, GNA12, GNA13 and GNA14. A proteolytic cleavage generates a new N-terminus that functions as a tethered ligand. Activating serine proteases include trypsin, mast cell tryptase, coagulation factors VII and Xa, myeloblastin/PRTN3 and membrane-type serine protease 1/ST14. Subsequent cleavage by serine proteases, including neutrophil elastase and cathepsin G, leads to receptor deactivation. At least in part, implicated proteases are also shown to activate the receptor; the glycosylation status of the receptor is thought to contribute to the difference. In addition to conventional trypsin-like proteases activated by other proteases and glycosidases derived from bacteria, fungi and insects. Activated by serine protease allergens such as dust mite Der p3 and Der p9 and mold Pen c13. Activated by P.gingivalis arginine-specific (trypsin-like) cysteine proteinases called gingipains. Activated by S.griseus exogenous chitinase. Activated by A.alternata aspartate protease; the cleavage generates non-conventional processed forms. Proteolytically cleaved by coagulation factor Xa (F10); cleavage results in activation of F2RL1-dependent signaling. Post-translationally, N-glycosylated and sialylated. In terms of processing, multiple phosphorylated on serine and threonine residues in the cytoplasmic region upon receptor activation; required for receptor desensitization and recruitment of beta-arrestin. Monoubiquitinated by CBL at the plasma membrane and in early endosomes; not required for receptor endocytosis but for translocation to late endosomes or lysosomes. Deubiquitination involves STAMBP and USP8; required for lysosomal trafficking and receptor degradation. Widely expressed in tissues with especially high levels in pancreas, liver, kidney, small intestine, and colon. Moderate expression is detected in many organs, but none in brain or skeletal muscle. Expressed in endothelial cells.

The protein resides in the cell membrane. Its activity is regulated as follows. Activated upon interaction by mucunain, a cowhage (Mucuna pruriens) plant cysteine proteinase. In terms of biological role, receptor for trypsin and trypsin-like enzymes coupled to G proteins. Its function is mediated through the activation of several signaling pathways including phospholipase C (PLC), intracellular calcium, mitogen-activated protein kinase (MAPK), I-kappaB kinase/NF-kappaB and Rho. Can also be transactivated by cleaved F2R/PAR1. Involved in modulation of inflammatory responses and regulation of innate and adaptive immunity, and acts as a sensor for proteolytic enzymes generated during infection. Generally is promoting inflammation. Can signal synergistically with TLR4 and probably TLR2 in inflammatory responses and modulates TLR3 signaling. Has a protective role in establishing the endothelial barrier; the activity involves coagulation factor X. Regulates endothelial cell barrier integrity during neutrophil extravasation, probably following proteolytic cleavage by PRTN3. Proposed to have a bronchoprotective role in airway epithelium, but also shown to compromise the airway epithelial barrier by interrupting E-cadherin adhesion. Involved in the regulation of vascular tone; activation results in hypotension presumably mediated by vasodilation. Associates with a subset of G proteins alpha subunits such as GNAQ, GNA11, GNA14, GNA12 and GNA13, but probably not with G(o)-alpha, G(i) subunit alpha-1 and G(i) subunit alpha-2. However, according to PubMed:21627585 can signal through G(i) subunit alpha. Believed to be a class B receptor which internalizes as a complex with arrestin and traffic with it to endosomal vesicles, presumably as desensitized receptor, for extended periods of time. Mediates inhibition of TNF-alpha stimulated JNK phosphorylation via coupling to GNAQ and GNA11; the function involves dissociation of RIPK1 and TRADD from TNFR1. Mediates phosphorylation of nuclear factor NF-kappa-B RELA subunit at 'Ser-536'; the function involves IKBKB and is predominantly independent of G proteins. Involved in cellular migration. Involved in cytoskeletal rearrangement and chemotaxis through beta-arrestin-promoted scaffolds; the function is independent of GNAQ and GNA11 and involves promotion of cofilin dephosphorylation and actin filament severing. Induces redistribution of COPS5 from the plasma membrane to the cytosol and activation of the JNK cascade is mediated by COPS5. Involved in the recruitment of leukocytes to the sites of inflammation and is the major PAR receptor capable of modulating eosinophil function such as pro-inflammatory cytokine secretion, superoxide production and degranulation. During inflammation promotes dendritic cell maturation, trafficking to the lymph nodes and subsequent T-cell activation. Involved in antimicrobial response of innate immune cells; activation enhances phagocytosis of Gram-positive and killing of Gram-negative bacteria. Acts synergistically with interferon-gamma in enhancing antiviral responses. Implicated in a number of acute and chronic inflammatory diseases such as of the joints, lungs, brain, gastrointestinal tract, periodontium, skin, and vascular systems, and in autoimmune disorders. Probably mediates activation of pro-inflammatory and pro-fibrotic responses in fibroblasts, triggered by coagulation factor Xa (F10). Mediates activation of barrier protective signaling responses in endothelial cells, triggered by coagulation factor Xa (F10). In Homo sapiens (Human), this protein is Proteinase-activated receptor 2 (F2RL1).